Consider the following 416-residue polypeptide: MDAEIIAIGSEMLTPERLDTNSLYLTAELNKLGVEVVSKCVIGDDRNRLAEQVRHSIARSAIVIITGGLGPTEDDVTREAVAMALDRKLTLNSEVLSWLEQRFAAAKRHMAEVNKRQAFVIEGAGILPNDRGTAPGQWLEESGAFAMLLPGPPHELKAMFERQCLPRLARVVPKQVIRTLFMRVAGMGESDLDQLIAPVYKKYENPATTILAAAGDIQIHLRARCRTESEGDALLAEVAGPIELLLGDRIYSRNGDSLEVVVGGLLRKLHATVCVAESATGGMLGERLTTVPGSSEYFTGGFITYNNQMKMELLGVSPEILQEHGAVSKETAEAMAIGARRRTSSTYALSITGAAGPDSADERVPVGTMYTAIADAAGTLVVHRQFLGDRQRIRTFVTQMALDLLRRRITGKTQTA.

Belongs to the CinA family.

This chain is CinA-like protein, found in Solibacter usitatus (strain Ellin6076).